A 792-amino-acid chain; its full sequence is Ribonucleoside-diphosphate reductase large subunit (792 aa).

The 92-residue stretch at Met1–Lys92 folds into the ATP-cone domain. ATP is bound by residues Lys5–Arg6, Glu11–Lys17, Thr53, and Asp57. Lys17 is subject to N6-acetyllysine. 2 residues coordinate GDP: Ser202 and Ser217. Cys218 and Cys444 are joined by a disulfide. DTTP is bound by residues Asp226–Ile228, Lys243, Arg256, and Ala263–Gly264. An N6-acetyllysine modification is found at Lys376. Ser427 acts as the Proton acceptor in catalysis. Cys429 serves as the catalytic Cysteine radical intermediate. GDP contacts are provided by residues Glu431 and Thr604–Thr607. The active-site Proton acceptor is Glu431. A Phosphothreonine modification is found at Thr751.

It belongs to the ribonucleoside diphosphate reductase large chain family. In terms of assembly, heterodimer of a large and a small subunit. Interacts with RRM2B. Interacts with AHCYL1 which inhibits its activity.

The protein resides in the cytoplasm. It catalyses the reaction a 2'-deoxyribonucleoside 5'-diphosphate + [thioredoxin]-disulfide + H2O = a ribonucleoside 5'-diphosphate + [thioredoxin]-dithiol. Under complex allosteric control mediated by deoxynucleoside triphosphates and ATP binding to separate specificity and activation sites on the M1 subunit. The type of nucleotide bound at the specificity site determines substrate preference. It seems probable that ATP makes the enzyme reduce CDP and UDP, dGTP favors ADP reduction and dTTP favors GDP reduction. Stimulated by ATP and inhibited by dATP binding to the activity site, the dATP inhibition is mediated by AHCYL1 which stabilizes dATP in the site. Provides the precursors necessary for DNA synthesis. Catalyzes the biosynthesis of deoxyribonucleotides from the corresponding ribonucleotides. This chain is Ribonucleoside-diphosphate reductase large subunit (RRM1), found in Pongo abelii (Sumatran orangutan).